The sequence spans 247 residues: Translation initiation factor IF-3 (247 aa).

Disordered stretches follow at residues 1 to 20 (MIRE…TNRR) and 188 to 247 (LVRQ…PTAS). Residues 182–247 (AQKARELVRQ…AAEAQSPTAS (66 aa)) are needed for vegetative and developmental functions, but not for viability. The segment covering 207 to 217 (AGKSAAGASSG) has biased composition (low complexity). A compositionally biased stretch (basic and acidic residues) spans 218-232 (AEEKAEETAEEKKEA). Positions 233-247 (QAAPAAAEAQSPTAS) are enriched in low complexity.

This sequence belongs to the IF-3 family. In terms of assembly, monomer.

The protein resides in the cytoplasm. Its function is as follows. IF-3 binds to the 30S ribosomal subunit and shifts the equilibrium between 70S ribosomes and their 50S and 30S subunits in favor of the free subunits, thus enhancing the availability of 30S subunits on which protein synthesis initiation begins. This is Translation initiation factor IF-3 from Myxococcus xanthus.